The chain runs to 441 residues: Importin subunit alpha-8 (441 aa).

ARM repeat units lie at residues 39–79 (QRDI…NIAV), 80–118 (DNPG…NVAG), 121–158 (IHYR…NLCR), 160–199 (KPHP…HLSE), 202–241 (EDGI…AMTA), 244–284 (HQQT…NITA), 287–326 (KEQI…NMAL), and 330–370 (HDQI…NMLK).

This sequence belongs to the importin alpha family. As to quaternary structure, forms a complex with importin subunit beta-1.

The protein resides in the nucleus envelope. In terms of biological role, binds to conventional NLS motifs and mediates nuclear protein import across the nuclear envelope. This is Importin subunit alpha-8 from Arabidopsis thaliana (Mouse-ear cress).